The sequence spans 416 residues: MSTKQVTCRYFMHGVCREGSQCLFSHDLANSKPSTICKYYQKGYCAYGARCRYDHTKPPAAAGGAVGPAPNPSPSSGLHSPHPSPDIATSVMRTHSNEPGKREKKTLVLRDRNLTGLAEDKTPPSKVNNPGGCSDPQTSPEMKPHSYLDAIRTGLDDLEASSSYSNEPQLCPYAAAGECRFGDACVYLHGDMCEICRLQVLHPFDPEQRKAHEKMCMSTFEHEMEKAFAFQASQDKVCSICMEVILEKASASERRFGILSNCSHTYCLSCIRQWRCAKQFENPIIKSCPECRVISEFVIPSVYWVEDQNKKNELIEAFKQGMGKKACKYFEQGKGTCPFGSKCLYRHAYPDGRLAEPEKPRKQLSSEGTVRFFNSVRLWDFIENRETRQVPSTDDVDVTELGDLFMHLSGVESSEP.

2 C3H1-type zinc fingers span residues 2 to 29 (STKQ…HDLA) and 31 to 58 (SKPS…HTKP). A disordered region spans residues 61 to 144 (AAGGAVGPAP…DPQTSPEMKP (84 aa)). Over residues 95 to 123 (HSNEPGKREKKTLVLRDRNLTGLAEDKTP) the composition is skewed to basic and acidic residues. At Ser139 the chain carries Phosphoserine. A C3H1-type 3 zinc finger spans residues 165–192 (SNEPQLCPYAAAGECRFGDACVYLHGDM). Residues 193–222 (CEICRLQVLHPFDPEQRKAHEKMCMSTFEH) form a makorin-type Cys-His region. The segment at 238 to 292 (CSICMEVILEKASASERRFGILSNCSHTYCLSCIRQWRCAKQFENPIIKSCPECR) adopts an RING-type zinc-finger fold. The C3H1-type 4 zinc finger occupies 321-350 (GMGKKACKYFEQGKGTCPFGSKCLYRHAYP).

As to quaternary structure, interacts with PDLIM2 (via LIM zinc-binding domain). Interacts with RELA. In terms of tissue distribution, highly expressed in the testis, and lower expression in the brain, thymus, heart, lung, liver, spleen, kidney, ovary, uterus, and seminal vesicle (at protein level). Expressed in primary immune cells, such as CD4-positive and CD8-positive T cells, CD19-positive B cells and CD11c-positive dendritic cells, and in embryonic fibroblasts (at protein level).

It is found in the cytoplasm. Its subcellular location is the nucleus. The enzyme catalyses S-ubiquitinyl-[E2 ubiquitin-conjugating enzyme]-L-cysteine + [acceptor protein]-L-lysine = [E2 ubiquitin-conjugating enzyme]-L-cysteine + N(6)-ubiquitinyl-[acceptor protein]-L-lysine.. It functions in the pathway protein modification; protein ubiquitination. In terms of biological role, E3 ubiquitin ligase catalyzing the covalent attachment of ubiquitin moieties onto substrate proteins. Promotes the polyubiquitination and proteasome-dependent degradation of RELA/p65, thereby suppressing RELA-mediated NF-kappa-B transactivation and negatively regulating inflammatory responses. Plays a role in the regulation of spermiation and in male fertility. In Mus musculus (Mouse), this protein is E3 ubiquitin-protein ligase makorin-2 (Mkrn2).